A 427-amino-acid chain; its full sequence is Enolase 2 (427 aa).

Glutamine 165 contributes to the (2R)-2-phosphoglycerate binding site. Glutamate 207 functions as the Proton donor in the catalytic mechanism. Mg(2+)-binding residues include aspartate 244, glutamate 287, and aspartate 314. The (2R)-2-phosphoglycerate site is built by lysine 339, arginine 368, serine 369, and lysine 390. Residue lysine 339 is the Proton acceptor of the active site.

The protein belongs to the enolase family. In terms of assembly, component of the RNA degradosome, a multiprotein complex involved in RNA processing and mRNA degradation. Mg(2+) is required as a cofactor.

It localises to the cytoplasm. Its subcellular location is the secreted. It is found in the cell surface. It catalyses the reaction (2R)-2-phosphoglycerate = phosphoenolpyruvate + H2O. The protein operates within carbohydrate degradation; glycolysis; pyruvate from D-glyceraldehyde 3-phosphate: step 4/5. Its function is as follows. Catalyzes the reversible conversion of 2-phosphoglycerate (2-PG) into phosphoenolpyruvate (PEP). It is essential for the degradation of carbohydrates via glycolysis. This is Enolase 2 from Pseudomonas syringae pv. tomato (strain ATCC BAA-871 / DC3000).